The following is a 587-amino-acid chain: A-type ATP synthase subunit A (587 aa).

234–241 contacts ATP; it reads GPFGSGKT.

It belongs to the ATPase alpha/beta chains family. The N-terminus (approximately residues 106-122) interacts with subunit H. Has multiple subunits with at least A(3), B(3), C, D, E(1 or 2), F, H(2), I and proteolipid K(x).

It localises to the cell membrane. It carries out the reaction ATP + H2O + 4 H(+)(in) = ADP + phosphate + 5 H(+)(out). With respect to regulation, ATP hydrolysis is inhibited by N',N'-dicyclohexylcarbodiimide. Component of the A-type ATP synthase that produces ATP from ADP in the presence of a proton gradient across the membrane. The A chain is the catalytic subunit. Hydrolyzes ATP, GTP (86% of ATPase rate) and UTP (54% of ATPase rate), has very poor activity on CTP. This is A-type ATP synthase subunit A from Methanocaldococcus jannaschii (strain ATCC 43067 / DSM 2661 / JAL-1 / JCM 10045 / NBRC 100440) (Methanococcus jannaschii).